Reading from the N-terminus, the 422-residue chain is Probable ornithine aminotransferase, mitochondrial (422 aa).

Lys-273 bears the N6-(pyridoxal phosphate)lysine mark.

Belongs to the class-III pyridoxal-phosphate-dependent aminotransferase family. The cofactor is pyridoxal 5'-phosphate.

It is found in the mitochondrion matrix. It catalyses the reaction a 2-oxocarboxylate + L-ornithine = L-glutamate 5-semialdehyde + an L-alpha-amino acid. It functions in the pathway amino-acid biosynthesis; L-proline biosynthesis; L-glutamate 5-semialdehyde from L-ornithine: step 1/1. The polypeptide is Probable ornithine aminotransferase, mitochondrial (Caenorhabditis elegans).